The chain runs to 451 residues: Heme sensor protein HssS (451 aa).

Helical transmembrane passes span 9-29 and 164-184; these read IAIY…LFTN and IFLA…VIAS. The HAMP domain maps to 186–238; that stretch reads YSIIKPVTALKNATTRIMKGDFSTPIKQTRHDEIGTLQSRFNTMRQNLGQVDQ. The region spanning 246–451 is the Histidine kinase domain; sequence NVSHEIKTPL…KTQFIVKLFI (206 aa). Histidine 249 bears the Phosphohistidine; by autocatalysis mark.

Autophosphorylated.

It localises to the cell membrane. The enzyme catalyses ATP + protein L-histidine = ADP + protein N-phospho-L-histidine.. Member of the two-component regulatory system HssS/HssR involved in intracellular heme homeostasis and tempering of staphylococcal virulence. HssS functions as a heme sensor histidine kinase which is autophosphorylated at a histidine residue and transfers its phosphate group to an aspartate residue of HssR. HssR/HssS activates the expression of HrtAB, an efflux pump, in response to extracellular heme, hemin, hemoglobin or blood. The protein is Heme sensor protein HssS (hssS) of Staphylococcus epidermidis (strain ATCC 12228 / FDA PCI 1200).